A 178-amino-acid polypeptide reads, in one-letter code: Crossover junction endodeoxyribonuclease RuvC (178 aa).

Residues Asp-18, Glu-78, and Asp-150 contribute to the active site. Asp-18, Glu-78, and Asp-150 together coordinate Mg(2+).

The protein belongs to the RuvC family. In terms of assembly, homodimer which binds Holliday junction (HJ) DNA. The HJ becomes 2-fold symmetrical on binding to RuvC with unstacked arms; it has a different conformation from HJ DNA in complex with RuvA. In the full resolvosome a probable DNA-RuvA(4)-RuvB(12)-RuvC(2) complex forms which resolves the HJ. Mg(2+) serves as cofactor.

The protein resides in the cytoplasm. The catalysed reaction is Endonucleolytic cleavage at a junction such as a reciprocal single-stranded crossover between two homologous DNA duplexes (Holliday junction).. Its function is as follows. The RuvA-RuvB-RuvC complex processes Holliday junction (HJ) DNA during genetic recombination and DNA repair. Endonuclease that resolves HJ intermediates. Cleaves cruciform DNA by making single-stranded nicks across the HJ at symmetrical positions within the homologous arms, yielding a 5'-phosphate and a 3'-hydroxyl group; requires a central core of homology in the junction. The consensus cleavage sequence is 5'-(A/T)TT(C/G)-3'. Cleavage occurs on the 3'-side of the TT dinucleotide at the point of strand exchange. HJ branch migration catalyzed by RuvA-RuvB allows RuvC to scan DNA until it finds its consensus sequence, where it cleaves and resolves the cruciform DNA. In Granulibacter bethesdensis (strain ATCC BAA-1260 / CGDNIH1), this protein is Crossover junction endodeoxyribonuclease RuvC.